Reading from the N-terminus, the 358-residue chain is Feruloyl CoA ortho-hydroxylase F6H1-3 (358 aa).

One can recognise a Fe2OG dioxygenase domain in the interval 200-308 (TKESLLMGSK…RISVPIFVNP (109 aa)). Tyr-216 provides a ligand contact to 2-oxoglutarate. Fe cation is bound by residues His-231, Asp-233, and His-289. The 2-oxoglutarate site is built by Arg-299 and Ser-301.

The protein belongs to the iron/ascorbate-dependent oxidoreductase family. L-ascorbate serves as cofactor. The cofactor is Fe(2+). As to expression, mostly expressed in tubers, and, at low levels, in underground stems, stems, leaves and petioles.

The catalysed reaction is (E)-feruloyl-CoA + 2-oxoglutarate + O2 = (E)-6-hydroxyferuloyl-CoA + succinate + CO2. The protein operates within phenylpropanoid metabolism. In terms of biological role, 2-oxoglutarate (OG)- and Fe(II)-dependent dioxygenase (2OGD) involved in scopoletin biosynthesis. Converts feruloyl CoA into 6'-hydroxyferuloyl CoA, and, at low efficiency, caffeoyl-CoA into 6'-hydroxycaffeate, but has no activity with p-coumaroyl-CoA. The protein is Feruloyl CoA ortho-hydroxylase F6H1-3 of Ipomoea batatas (Sweet potato).